Here is a 362-residue protein sequence, read N- to C-terminus: G-prodeshotein coupled receptor 4 (362 aa).

The Extracellular portion of the chain corresponds to 1–8 (MGNHTWEG). Residue Asn3 is glycosylated (N-linked (GlcNAc...) asparagine). A helical transmembrane segment spans residues 9 to 45 (CHVDSRVDHLFPPSLYIFVIGVGLPTNCLALWAAYRQ). Cystine bridges form between Cys9-Cys258 and Cys90-Cys168. Residues 46–49 (VQQR) are Cytoplasmic-facing. A helical membrane pass occupies residues 50-80 (NELGVYLMNLSIADLLYICTLPLWVDYFLHH). Topologically, residues 81–85 (DNWIH) are extracellular. A helical transmembrane segment spans residues 86–121 (GPGSCKLFGFIFYTNIYISIAFLCCISVDRYLAVAH). At 122 to 129 (PLRFARLR) the chain is on the cytoplasmic side. A helical membrane pass occupies residues 130 to 156 (RVKTAVAVSSVVWATELGANSAPLFHD). Residues 157–172 (ELFRDRYNHTFCFEKF) are Extracellular-facing. Residues 157 to 172 (ELFRDRYNHTFCFEKF) are extracellular loop 2 (ECL2). N-linked (GlcNAc...) asparagine glycosylation occurs at Asn164. A helical transmembrane segment spans residues 173 to 210 (PMEGWVAWMNLYRVFVGFLFPWALMLLSYRGILRAVRG). Topologically, residues 211–214 (SVST) are cytoplasmic. The chain crosses the membrane as a helical span at residues 215 to 250 (ERQEKAKIKRLALSLIAIVLVCFAPYHVLLLSRSAI). Over 251–260 (YLGRPWDCGF) the chain is Extracellular. Residues 261–289 (EERVFSAYHSSLAFTSLNCVADPILYCLV) form a helical membrane-spanning segment. The Cytoplasmic portion of the chain corresponds to 290-362 (NEGARSDVAK…VQLKMLPPAQ (73 aa)). A disordered region spans residues 335–362 (AKAMTGSWAATPPSQGDQVQLKMLPPAQ).

The protein belongs to the G-protein coupled receptor 1 family.

It localises to the cell membrane. Activated by a network of residues that connects an extracellular-facing cavity to Glu-145, a conserved charged residue buried in the transmembrane core of the receptor. Protonation likely drives conformational changes in extracellular loop 2 (ECL2), which stabilizes movement of transmembrane 3 (TM3) and a series of rearrangements that connect the extracellular-facing cavity to Glu-145, a residue only conserved in proton-sensing G-protein coupled receptors. Proton-sensing G-protein coupled receptor activated by extracellular pH, which is required to monitor pH changes and generate adaptive reactions. Activated by an optimal pH of 6.8-7.2. Ligand binding causes a conformation change that triggers signaling via guanine nucleotide-binding proteins (G proteins) and modulates the activity of downstream effectors, such as adenylate cyclase. GPR4 is mainly coupled to G(s) G proteins and mediates activation of adenylate cyclase activity. May also couple with G(q) and G(12)/G(13) G proteins. Acts as a key regulator of respiratory sensitivity to CO2/H(+) in brain retrotrapezoid nucleus neurons: acts by mediating detection of protons generated by the formation of carbonic acid in the blood, an important mechanism to impulse to breathe. Also acts as a regulator of acid secretion in the kidney collecting duct by maintaining acid-base homeostasis in the kidney. Acidosis-induced GPR4 activation increases paracellular gap formation and permeability of vascular endothelial cells, possibly through the G(12)/G(13)/Rho GTPase signaling pathway. The polypeptide is G-prodeshotein coupled receptor 4 (Homo sapiens (Human)).